Reading from the N-terminus, the 254-residue chain is MQDPEQFSIESILQRLKERFPTEADEISSFFDWDLVHKFTVFLKEKNEAGGFFSKRDSEEILDRHVLESIYHVYRITKKIGSWKGTQLGDAGTGPGIPGFFFRCLKEHPIVVLIDSQKRKLSHTENFVRSNQIDGVKFQFIRAEESKLSLNYVTSRGFIPYPYSIEAICNLLKINGTYVPFLGKHDMDTNLEKKVLSYSGFKLEFSEDLVPLEFLGMRHIKFLKKVSSPRHGYPRAWKEISKESKGANGKDRID.

Residues G92, 143–144 (AE), and R156 each bind S-adenosyl-L-methionine.

It belongs to the methyltransferase superfamily. RNA methyltransferase RsmG family.

It localises to the cytoplasm. Specifically methylates the N7 position of a guanine in 16S rRNA. The chain is Ribosomal RNA small subunit methyltransferase G from Leptospira interrogans serogroup Icterohaemorrhagiae serovar copenhageni (strain Fiocruz L1-130).